The chain runs to 195 residues: MDHIIGFMGTTNMSHNTNLMIAAAATTTTTSSSSSSSSGGSGTNQLSRYENQKRRDWNTFGQYLRNHRPPLSLSRCSGAHVLEFLRYLDQFGKTKVHTHLCPFFGHPNPPAPCACPLRQAWGSLDALIGRLRAAFEENGGSPETNPFGARAVRLYLREVRDSQAKARGISYEKKKRKRPPPPLPPAQPAISSSPN.

The span at 28–38 shows a compositional bias: low complexity; the sequence is TTTSSSSSSSS. Disordered stretches follow at residues 28 to 51 and 162 to 195; these read TTTSSSSSSSSGGSGTNQLSRYEN and SQAKARGISYEKKKRKRPPPPLPPAQPAISSSPN. The 128-residue stretch at 48-175 folds into the ALOG domain; it reads RYENQKRRDW…ARGISYEKKK (128 aa). The short motif at 173 to 177 is the Nuclear localization signal element; sequence KKKRK.

Belongs to the plant homeotic and developmental regulators ALOG protein family. Induced by NAC054/CUC1 and NAC098/CUC2 in shoot organ boundary cells.

The protein resides in the nucleus. Functionally, probable transcription regulator that acts as a developmental regulator by promoting cell growth in response to light. May suppress organ differentiation in the boundary region. In Arabidopsis thaliana (Mouse-ear cress), this protein is Protein LIGHT-DEPENDENT SHORT HYPOCOTYLS 4 (LSH4).